Reading from the N-terminus, the 1154-residue chain is Caspase recruitment domain-containing protein 11 (1154 aa).

The CARD domain maps to 18–110; it reads EEDALWENVE…ELYKLVTGKE (93 aa). Positions 111 to 128 are linker; sequence PTRRFSTIVVEEGHEGLT. The stretch at 130 to 449 forms a coiled coil; the sequence is FLMNEVIKLQ…KDSNNLDQSL (320 aa). Phosphoserine is present on residues serine 448 and serine 466. Residues 450–666 form an inhibitory domain (ID) region; that stretch reads PRNLPVTIIS…GHVRGPGPSV (217 aa). Residues 460–626 are disordered; sequence QDFGDASPRT…HSSSSSHQSE (167 aa). Over residues 473–484 the composition is skewed to acidic residues; the sequence is EADDSSTSEESP. Phosphoserine is present on serine 512. The span at 518-529 shows a compositional bias: basic and acidic residues; it reads RTSDFQAKGHEE. Positions 534-562 are enriched in polar residues; it reads ASPSSCGSLPITNSFTKMQPPRSRSSIMS. The residue at position 535 (serine 535) is a Phosphoserine. At serine 559 the chain carries Phosphoserine; by PKC/PRKCB and PKC/PRKCQ. The span at 573–587 shows a compositional bias: basic and acidic residues; sequence IVRRYKEDAPHRSTV. At serine 593 the chain carries Phosphoserine. The span at 614 to 625 shows a compositional bias: low complexity; that stretch reads SSIHSSSSSHQS. Phosphoserine; by PKC/PRKCB and PKC/PRKCQ is present on residues serine 644 and serine 652. Residues 667–755 enclose the PDZ domain; it reads QHTTLNGDSL…PVTLHYKVNH (89 aa). Serine 886 and serine 925 each carry phosphoserine. In terms of domain architecture, Guanylate kinase-like spans 973 to 1140; it reads RRRPVLFTPT…LLRVVKDKIG (168 aa).

As to quaternary structure, homodimer; disulfide-linked. Homomultimer; polymerizes following activation, forming a nucleating helical template that seeds BCL10-filament formation via a CARD-CARD interaction. Interacts (via CARD domain) with BCL10 (via CARD domain); interaction takes place following CARD11 activation and polymerization, leading to the formation of a filamentous CBM complex assembly. Component of a CBM complex (CARD11-BCL10-MALT1) complex involved in NF-kappa-B activation. Found in a membrane raft complex, at least composed of BCL10, CARD11, DPP4 and IKBKB. Interacts (via PDZ domain) with DPP4 (via cytoplasmic tail). Phosphorylation at Ser-559, Ser-644 and Ser-652 by PRKCB and PRKCQ leads to a shift from an inactive to an active form that activates the NF-kappa-B signaling. As to expression, detected in adult peripheral blood leukocytes, thymus, spleen and liver. Also found in promyelocytic leukemia HL-60 cells, chronic myelogenous leukemia K-562 cells, Burkitt's lymphoma Raji cells and colorectal adenocarcinoma SW480 cells. Not detected in HeLaS3, MOLT-4, A-549 and G431 cells.

It localises to the cytoplasm. The protein resides in the membrane raft. With respect to regulation, maintained in an autoinhibited state via homodimerization in which the CARD domain forms an extensive interaction with the adjacent linker and coiled-coil regions. Activation downstream of T-cell receptor (TCR) by phosphorylation by PRKCB and PRKCQ triggers CARD11 homooligomerization and BCL10 recruitment, followed by activation of NF-kappa-B. In terms of biological role, adapter protein that plays a key role in adaptive immune response by transducing the activation of NF-kappa-B downstream of T-cell receptor (TCR) and B-cell receptor (BCR) engagement. Transduces signals downstream TCR or BCR activation via the formation of a multiprotein complex together with BCL10 and MALT1 that induces NF-kappa-B and MAP kinase p38 (MAPK11, MAPK12, MAPK13 and/or MAPK14) pathways. Upon activation in response to TCR or BCR triggering, CARD11 homooligomerizes to form a nucleating helical template that recruits BCL10 via CARD-CARD interaction, thereby promoting polymerization of BCL10 and subsequent recruitment of MALT1: this leads to I-kappa-B kinase (IKK) phosphorylation and degradation, and release of NF-kappa-B proteins for nuclear translocation. Its binding to DPP4 induces T-cell proliferation and NF-kappa-B activation in a T-cell receptor/CD3-dependent manner. Promotes linear ubiquitination of BCL10 by promoting the targeting of BCL10 to RNF31/HOIP. Stimulates the phosphorylation of BCL10. Also activates the TORC1 signaling pathway. This Homo sapiens (Human) protein is Caspase recruitment domain-containing protein 11.